A 217-amino-acid chain; its full sequence is Segregation and condensation protein B (217 aa).

It belongs to the ScpB family. In terms of assembly, homodimer. Homodimerization may be required to stabilize the binding of ScpA to the Smc head domains. Component of a cohesin-like complex composed of ScpA, ScpB and the Smc homodimer, in which ScpA and ScpB bind to the head domain of Smc. The presence of the three proteins is required for the association of the complex with DNA.

The protein resides in the cytoplasm. In terms of biological role, participates in chromosomal partition during cell division. May act via the formation of a condensin-like complex containing Smc and ScpA that pull DNA away from mid-cell into both cell halves. In Geobacillus kaustophilus (strain HTA426), this protein is Segregation and condensation protein B.